Reading from the N-terminus, the 402-residue chain is CinA-like protein (402 aa).

The protein belongs to the CinA family.

This Fusobacterium nucleatum subsp. nucleatum (strain ATCC 25586 / DSM 15643 / BCRC 10681 / CIP 101130 / JCM 8532 / KCTC 2640 / LMG 13131 / VPI 4355) protein is CinA-like protein.